The primary structure comprises 194 residues: Phosphoheptose isomerase (194 aa).

The region spanning 37 to 194 (IANSFKQGGK…LIEFEMAKTA (158 aa)) is the SIS domain. 52 to 54 (NGG) is a substrate binding site. Positions 61 and 65 each coordinate Zn(2+). Residues Glu65, 93 to 94 (ND), 119 to 121 (STS), Ser124, and Gln172 contribute to the substrate site. Zn(2+)-binding residues include Gln172 and His180.

It belongs to the SIS family. GmhA subfamily. As to quaternary structure, homotetramer. Requires Zn(2+) as cofactor.

Its subcellular location is the cytoplasm. It catalyses the reaction 2 D-sedoheptulose 7-phosphate = D-glycero-alpha-D-manno-heptose 7-phosphate + D-glycero-beta-D-manno-heptose 7-phosphate. The protein operates within carbohydrate biosynthesis; D-glycero-D-manno-heptose 7-phosphate biosynthesis; D-glycero-alpha-D-manno-heptose 7-phosphate and D-glycero-beta-D-manno-heptose 7-phosphate from sedoheptulose 7-phosphate: step 1/1. It functions in the pathway bacterial outer membrane biogenesis; LOS core biosynthesis. In terms of biological role, catalyzes the isomerization of sedoheptulose 7-phosphate in D-glycero-D-manno-heptose 7-phosphate. This chain is Phosphoheptose isomerase, found in Haemophilus ducreyi (strain 35000HP / ATCC 700724).